A 127-amino-acid chain; its full sequence is Calcitonin receptor-stimulating peptide 1 (127 aa).

The first 25 residues, 1-25, serve as a signal peptide directing secretion; that stretch reads MGFWKFSPFLVLGILALYQVGFLQA. Positions 26-79 are excised as a propeptide; it reads APFRSALENPPDSGVRNEEELRLLLAAVMKDYMQMKTHELEQEQETEGSRVAVQ. Cysteines 83 and 88 form a disulfide.

This sequence belongs to the calcitonin family.

It is found in the secreted. Its function is as follows. Stimulates cAMP production in porcine kidney cell line LLC-PK1 via the calcitonin receptor (CT) but not via the CT-like (CL) receptor. The chain is Calcitonin receptor-stimulating peptide 1 (CRSP1) from Canis lupus familiaris (Dog).